A 260-amino-acid polypeptide reads, in one-letter code: MATDVHRPLSTQKAATAAAQASTAAASAVRVDGLTRSFDGRAVIDNLELDVRPGEFVALLGRSGCGKSTLLRILAGLDRDIEGTVLVPRRKAVAFQAPRLMPWKKVWRNVLLGLPGKPERAVAEQALTEVGLAHRSHAWPKTLSGGEAQRASLARALVREPDLLLLDEPFGALDALTRIKAQRLVGELWQRRGCAVLLVTHDVEEAVLLADRVLVMDDGVIAYETEVELDRPRDITDPRFAELRAELLERLGVDTAAEAA.

Positions 29-243 constitute an ABC transporter domain; it reads VRVDGLTRSF…DITDPRFAEL (215 aa). 61-68 serves as a coordination point for ATP; that stretch reads GRSGCGKS.

Belongs to the ABC transporter superfamily. Aliphatic sulfonates importer (TC 3.A.1.17.2) family. The complex is composed of two ATP-binding proteins (SsuB), two transmembrane proteins (SsuC) and a solute-binding protein (SsuA).

It localises to the cell membrane. The enzyme catalyses ATP + H2O + aliphatic sulfonate-[sulfonate-binding protein]Side 1 = ADP + phosphate + aliphatic sulfonateSide 2 + [sulfonate-binding protein]Side 1.. In terms of biological role, part of the ABC transporter complex SsuABC involved in aliphatic sulfonates import. Responsible for energy coupling to the transport system. This Streptomyces avermitilis (strain ATCC 31267 / DSM 46492 / JCM 5070 / NBRC 14893 / NCIMB 12804 / NRRL 8165 / MA-4680) protein is Aliphatic sulfonates import ATP-binding protein SsuB 1.